Reading from the N-terminus, the 221-residue chain is Serine protease inhibitor 7 (221 aa).

A signal peptide spans 1 to 22 (MKCLFLLCLCLVPIVVFSSTFT). The propeptide occupies 23–28 (SKNPIN). The Vacuolar targeting signal signature appears at 25-30 (NPINLP). Intrachain disulfides connect Cys-76–Cys-125 and Cys-174–Cys-191.

Belongs to the protease inhibitor I3 (leguminous Kunitz-type inhibitor) family. Tubers. Not detected in root, stem, leaves or flower bud.

It localises to the vacuole. In terms of biological role, inhibitor of trypsin (serine protease). May protect the plant by inhibiting proteases of invading organisms. The chain is Serine protease inhibitor 7 from Solanum tuberosum (Potato).